The chain runs to 211 residues: ATP phosphoribosyltransferase (211 aa).

The protein belongs to the ATP phosphoribosyltransferase family. Short subfamily. As to quaternary structure, heteromultimer composed of HisG and HisZ subunits.

It is found in the cytoplasm. The catalysed reaction is 1-(5-phospho-beta-D-ribosyl)-ATP + diphosphate = 5-phospho-alpha-D-ribose 1-diphosphate + ATP. It functions in the pathway amino-acid biosynthesis; L-histidine biosynthesis; L-histidine from 5-phospho-alpha-D-ribose 1-diphosphate: step 1/9. Functionally, catalyzes the condensation of ATP and 5-phosphoribose 1-diphosphate to form N'-(5'-phosphoribosyl)-ATP (PR-ATP). Has a crucial role in the pathway because the rate of histidine biosynthesis seems to be controlled primarily by regulation of HisG enzymatic activity. This is ATP phosphoribosyltransferase from Pseudomonas putida (strain GB-1).